The primary structure comprises 220 residues: Protein-L-isoaspartate O-methyltransferase (220 aa).

Ser69 is a catalytic residue.

The protein belongs to the methyltransferase superfamily. L-isoaspartyl/D-aspartyl protein methyltransferase family.

The protein localises to the cytoplasm. The catalysed reaction is [protein]-L-isoaspartate + S-adenosyl-L-methionine = [protein]-L-isoaspartate alpha-methyl ester + S-adenosyl-L-homocysteine. In terms of biological role, catalyzes the methyl esterification of L-isoaspartyl residues in peptides and proteins that result from spontaneous decomposition of normal L-aspartyl and L-asparaginyl residues. It plays a role in the repair and/or degradation of damaged proteins. The polypeptide is Protein-L-isoaspartate O-methyltransferase (Alcanivorax borkumensis (strain ATCC 700651 / DSM 11573 / NCIMB 13689 / SK2)).